Here is a 433-residue protein sequence, read N- to C-terminus: FAD-dependent monooxygenase notI' (433 aa).

Positions 45 and 117 each coordinate FAD. The active site involves R195. FAD-binding residues include D314 and A327.

This sequence belongs to the paxM FAD-dependent monooxygenase family. FAD serves as cofactor.

It functions in the pathway alkaloid biosynthesis. In terms of biological role, FAD-dependent monooxygenase; part of the gene cluster that mediates the biosynthesis of notoamide, a fungal indole alkaloid that belongs to a family of natural products containing a characteristic bicyclo[2.2.2]diazaoctane core. The first step of notoamide biosynthesis involves coupling of L-proline and L-tryptophan by the bimodular NRPS notE', to produce cyclo-L-tryptophan-L-proline called brevianamide F. The reverse prenyltransferase notF' then acts as a deoxybrevianamide E synthase and converts brevianamide F to deoxybrevianamide E via reverse prenylation at C-2 of the indole ring leading to the bicyclo[2.2.2]diazaoctane core. Deoxybrevianamide E is further hydroxylated at C-6 of the indole ring, likely catalyzed by the cytochrome P450 monooxygenase notG', to yield 6-hydroxy-deoxybrevianamide E. 6-hydroxy-deoxybrevianamide E is a specific substrate of the prenyltransferase notC' for normal prenylation at C-7 to produce 6-hydroxy-7-prenyl-deoxybrevianamide, also called notoamide S. As the proposed pivotal branching point in notoamide biosynthesis, notoamide S can be diverted to notoamide E through an oxidative pyran ring closure putatively catalyzed by either notH' cytochrome P450 monooxygenase or the notD' FAD-linked oxidoreductase. This step would be followed by an indole 2,3-epoxidation-initiated pinacol-like rearrangement catalyzed by the notB' FAD-dependent monooxygenase leading to the formation of notoamide C and notoamide D. On the other hand notoamide S is converted to notoamide T by notH' (or notD'), a bifunctional oxidase that also functions as the intramolecular Diels-Alderase responsible for generation of (-)-notoamide T. To generate antipodal (+)-notoaminide T, notH (or notD) in Aspergillus strain MF297-2 is expected to catalyze a Diels-Alder reaction leading to the opposite stereochemistry. The remaining oxidoreductase notD' (or notH') likely catalyzes the oxidative pyran ring formation to yield (-)-stephacidin A. The FAD-dependent monooxygenase notI' is highly similar to notB' and is predicted to catalyze a similar conversion from (-)-stephacidin A to (+)-notoamide B via the 2,3-epoxidation of (-)-stephacidin A followed by a pinacol-type rearrangement. Finally, it remains unclear which enzyme could be responsible for the final hydroxylation steps leading to notoamide A and sclerotiamide. The sequence is that of FAD-dependent monooxygenase notI' from Aspergillus versicolor.